We begin with the raw amino-acid sequence, 125 residues long: MLSLGVSIFLLVFLIPENSGLECYQCTWMKNSQSPDNCYKNLPNATACAKDMIYCVTDERYEDDEFISIRRFCSSMPMDGRCTEVGKAKDCKYSCEVDACNFSTSIEPSKVFVFSILAMGLVLHT.

Residues 1–20 (MLSLGVSIFLLVFLIPENSG) form the signal peptide.

Belongs to the scoloptoxin-05 family. Post-translationally, contains 4 disulfide bonds. Expressed by the venom gland.

It is found in the secreted. The protein is U-scoloptoxin(05)-Er1a of Ethmostigmus rubripes (Giant centipede).